An 81-amino-acid polypeptide reads, in one-letter code: Beta-catenin-interacting protein 1 (81 aa).

A Phosphoserine modification is found at Ser-59.

This sequence belongs to the CTNNBIP1 family. As to quaternary structure, binds CTNNB1. In terms of tissue distribution, highly expressed in heart, brain, liver and skeletal muscle. Detected at low levels in kidney, testis and lung.

The protein resides in the cytoplasm. It localises to the nucleus. Prevents the interaction between CTNNB1 and TCF family members, and acts as a negative regulator of the Wnt signaling pathway. In Mus musculus (Mouse), this protein is Beta-catenin-interacting protein 1 (Ctnnbip1).